Here is a 311-residue protein sequence, read N- to C-terminus: Protoheme IX farnesyltransferase (311 aa).

The next 9 membrane-spanning stretches (helical) occupy residues 32-52 (VMSLVVFTALVGLVVSPVVVD), 53-73 (PLYGFVAILCIAIGGGGAGAL), 98-118 (ISRGKALIFSSILSVLSVFLM), 120-140 (VLINWFSALFLAFTIFFYIVI), 153-173 (IVIGGAAGAFPPMIGWAAATG), 180-200 (FLLFLIIFMWTPPHFWSLCLF), 226-246 (ILVYAIITAVCAIGPYITGYA), 248-268 (IIYGISSTILGGMFVYFAYRL), and 285-305 (FFFSLFYLGAIFGILLIEFLI).

This sequence belongs to the UbiA prenyltransferase family. Protoheme IX farnesyltransferase subfamily.

Its subcellular location is the cell inner membrane. The catalysed reaction is heme b + (2E,6E)-farnesyl diphosphate + H2O = Fe(II)-heme o + diphosphate. The protein operates within porphyrin-containing compound metabolism; heme O biosynthesis; heme O from protoheme: step 1/1. In terms of biological role, converts heme B (protoheme IX) to heme O by substitution of the vinyl group on carbon 2 of heme B porphyrin ring with a hydroxyethyl farnesyl side group. This Bartonella bacilliformis (strain ATCC 35685 / KC583 / Herrer 020/F12,63) protein is Protoheme IX farnesyltransferase.